The following is a 227-amino-acid chain: Cytidylate kinase (227 aa).

An ATP-binding site is contributed by 10–18 (GPASSGKST).

The protein belongs to the cytidylate kinase family. Type 1 subfamily.

Its subcellular location is the cytoplasm. It carries out the reaction CMP + ATP = CDP + ADP. It catalyses the reaction dCMP + ATP = dCDP + ADP. The chain is Cytidylate kinase from Streptococcus agalactiae serotype III (strain NEM316).